Reading from the N-terminus, the 310-residue chain is MPISEKSSATNTRLVVKKLFARQLHEGFGAVVRRSIGRFEFRYFDPFLVLDEFSVSAPAGFPDHPHRGFETVTYMLEGEILHEDCEGHKGVIREGGLQWMTAGKGIVHSEMPSSNSNGITHNKGLQLWINLSSRQKLVEPSYQEIESKDIAETEKDGVRVRVIAGEWNGVKSKICTRTPTMYLDFTLSPGSRISQPIPLHWNAFVYVLQGHGHFGDSKLQHSAAAAHHLLVLGLGGDMLEAWNGSDSGLPLRFILVAGEPIGEPMVQFGPFVMNTQEEIDETIDDFENFRNGFEKARHWKSQAASALGLF.

This sequence belongs to the pirin family.

The protein resides in the nucleus. This is Pirin-like protein At1g50590 from Arabidopsis thaliana (Mouse-ear cress).